The following is a 194-amino-acid chain: Serine/threonine-protein kinase mos (194 aa).

In terms of domain architecture, Protein kinase spans 47–194; it reads LCLLNLLGSG…HLDLKPANIF (148 aa). ATP is bound by residues 53–61 and lysine 74; that span reads LGSGGFGSV. Residue aspartate 187 is the Proton acceptor of the active site.

Belongs to the protein kinase superfamily. Ser/Thr protein kinase family.

The catalysed reaction is L-seryl-[protein] + ATP = O-phospho-L-seryl-[protein] + ADP + H(+). It catalyses the reaction L-threonyl-[protein] + ATP = O-phospho-L-threonyl-[protein] + ADP + H(+). The chain is Serine/threonine-protein kinase mos (MOS) from Dendroaspis angusticeps (Eastern green mamba).